Here is a 486-residue protein sequence, read N- to C-terminus: Protein DETOXIFICATION 16 (486 aa).

Helical transmembrane passes span 35-55 (GPLI…VMFV), 68-88 (IATS…ASAL), 117-137 (LASI…VFFG), 142-162 (IATL…AYGL), 179-199 (VVFC…VLVF), 207-227 (GAAL…FCYV), 259-279 (ALMV…SGLL), 288-308 (VLSI…GLSG), 331-351 (RVVI…LILI), 365-385 (VVSY…LDSL), 401-421 (IGAI…GLLL), and 433-453 (WLGI…VTIF).

It belongs to the multi antimicrobial extrusion (MATE) (TC 2.A.66.1) family.

Its subcellular location is the membrane. The chain is Protein DETOXIFICATION 16 from Arabidopsis thaliana (Mouse-ear cress).